Reading from the N-terminus, the 410-residue chain is MGQDFSRFRVVDMTGELGPYTAKMFAGLGADVIHVESPAGDPLRRVGPWFRNQPGVQASLPYLYYNAGKRGFAVDLEHEAGREVFRTLCSGADLLVESCRPGYLDGLGLSYEELSRDNARLVQTSVTPFGRTGPLAAYPGSDLTCSALSGFLWLAGIDGDKPVRAPDNQAYRMAEAYAAVGSAIALFSAQRTGKGQLVDVACIEAEAMALENAAQFWDLEGKIRRGRGREAGSATLHPCADGYIALVAIMGRNKDMWTPFVRWMEAEGVEEWPLFDDDKWIDYAYRTSEEGYTTFCRVFERYTRSRSKAELYEIGQRFNVAVTPVSDGRDLLANPQLAHREFWQTQFNDTLGADITYPGAPYEFGELQWQLGRNAPRIGEHTREILVECGYPAFEIDNLLRMGAVYAEQH.

It belongs to the CoA-transferase III family. As to quaternary structure, heterotetramer composed of 2 BbsE subunits and 2 BbsF subunits.

It carries out the reaction (R)-2-benzylsuccinate + succinyl-CoA = (R)-2-benzylsuccinyl-CoA + succinate. It participates in xenobiotic degradation; toluene degradation. Its activity is regulated as follows. Inhibited by (S)-benzylsuccinyl-CoA. In terms of biological role, catalyzes the reversible conversion of (R)-2-benzylsuccinate to (R)-2-benzylsuccinyl-CoA. Inactive with (S)-benzylsuccinate. In Thauera aromatica, this protein is Succinyl-CoA:(R)-benzylsuccinate CoA-transferase subunit BbsE (bbsE).